The chain runs to 636 residues: Nitrous-oxide reductase (636 aa).

A signal peptide (tat-type signal) is located at residues 1 to 49; sequence MSDDTKSPHEETHGLNRRGFLGASALTGAAALVGASALGSAVVGREARA. Residues His-127, His-128, and His-176 each contribute to the Cu cation site. 4 residues coordinate Ca(2+): Tyr-254, Glu-257, Met-265, and Asp-271. Residues 302-312 are compositionally biased toward basic and acidic residues; it reads DGRRKDGKDSP. A disordered region spans residues 302 to 322; that stretch reads DGRRKDGKDSPVTRYIPVPKN. Asn-322 lines the Ca(2+) pocket. Cu cation is bound by residues His-324, His-380, and His-431. Ca(2+)-binding residues include Lys-452 and Glu-467. 7 residues coordinate Cu cation: His-492, His-581, Cys-616, Trp-618, Cys-620, His-624, and Met-627. The tract at residues 540 to 636 is COX2-like; sequence NKVRVYMVSM…MCGRMLVEKA (97 aa).

This sequence belongs to the NosZ family. The protein in the C-terminal section; belongs to the cytochrome c oxidase subunit 2 family. As to quaternary structure, homodimer. The cofactor is Ca(2+). Cu cation is required as a cofactor. Post-translationally, predicted to be exported by the Tat system. The position of the signal peptide cleavage has not been experimentally proven.

It is found in the periplasm. The catalysed reaction is N2 + 2 Fe(III)-[cytochrome c] + H2O = nitrous oxide + 2 Fe(II)-[cytochrome c] + 2 H(+). Its pathway is nitrogen metabolism; nitrate reduction (denitrification); dinitrogen from nitrate: step 4/4. Nitrous-oxide reductase is part of a bacterial respiratory system which is activated under anaerobic conditions in the presence of nitrate or nitrous oxide. The protein is Nitrous-oxide reductase (nosZ) of Pseudomonas aeruginosa (strain ATCC 15692 / DSM 22644 / CIP 104116 / JCM 14847 / LMG 12228 / 1C / PRS 101 / PAO1).